The primary structure comprises 537 residues: Glucose-6-phosphate isomerase (537 aa).

Residue glutamate 341 is the Proton donor of the active site. Residues histidine 372 and lysine 501 contribute to the active site.

It belongs to the GPI family.

The protein resides in the cytoplasm. The catalysed reaction is alpha-D-glucose 6-phosphate = beta-D-fructose 6-phosphate. It functions in the pathway carbohydrate biosynthesis; gluconeogenesis. Its pathway is carbohydrate degradation; glycolysis; D-glyceraldehyde 3-phosphate and glycerone phosphate from D-glucose: step 2/4. Its function is as follows. Catalyzes the reversible isomerization of glucose-6-phosphate to fructose-6-phosphate. This Jannaschia sp. (strain CCS1) protein is Glucose-6-phosphate isomerase.